A 480-amino-acid chain; its full sequence is DnaJ homolog subfamily A member 3, mitochondrial (480 aa).

Arg-58 carries the post-translational modification Omega-N-methylarginine; by CARM1. Residues 93-158 (DYYQILGVPR…VKRKQYDAYG (66 aa)) form the J domain. Position 134 is an N6-acetyllysine (Lys-134). The segment at 223-301 (GVNKEFTVNI…CRGAGQAKQK (79 aa)) adopts a CR-type zinc-finger fold. Cys-236 lines the Zn(2+) pocket. CXXCXGXG motif repeat units lie at residues 236–243 (CERCDGKG), 253–260 (CHYCGGSG), 275–282 (CRRCGGRG), and 289–296 (CVVCRGAG). Arg-238 is modified (omega-N-methylarginine; by CARM1). Residues Cys-239, Cys-253, Cys-256, Cys-275, Cys-278, Cys-289, and Cys-292 each coordinate Zn(2+). An Omega-N-methylarginine; by CARM1 modification is found at Arg-293. Ser-398 is subject to Phosphoserine. The disordered stretch occupies residues 437–468 (TVNGVTHTSTGGRTMDSSAGSKDRREAGEDNE). Over residues 439–456 (NGVTHTSTGGRTMDSSAG) the composition is skewed to polar residues.

As to quaternary structure, interacts with JAK2, HSPA9B and IFN-gammaR2 chain. Interacts with Ras GTPase-activating protein 1 (RASA1). Isoform 2 interacts with MUSK (via the cytoplasmic domain). Post-translationally, tyrosine phosphorylated.

The protein localises to the mitochondrion matrix. It is found in the cytoplasm. The protein resides in the cytosol. It localises to the postsynaptic cell membrane. In terms of biological role, modulates apoptotic signal transduction or effector structures within the mitochondrial matrix. Affect cytochrome C release from the mitochondria and caspase 3 activation, but not caspase 8 activation. Isoform 1 increases apoptosis triggered by both TNF and the DNA-damaging agent mytomycin C; in sharp contrast, isoform 2 suppresses apoptosis. Can modulate IFN-gamma-mediated transcriptional activity. Isoform 2 may play a role in neuromuscular junction development as an effector of the MUSK signaling pathway. This chain is DnaJ homolog subfamily A member 3, mitochondrial (Dnaja3), found in Mus musculus (Mouse).